Here is a 558-residue protein sequence, read N- to C-terminus: DEAD-box ATP-dependent RNA helicase 49 (558 aa).

The Q motif motif lies at F16–A44. One can recognise a Helicase ATP-binding domain in the interval I47–V226. A60–T67 contacts ATP. Positions D174–D177 match the DEAD box motif. Residues Q255–D402 enclose the Helicase C-terminal domain. The interval K506–L558 is disordered. A compositionally biased stretch (basic and acidic residues) spans S521–K530. Over residues Q549–L558 the composition is skewed to acidic residues.

The protein belongs to the DEAD box helicase family. DDX55/SPB4 subfamily.

It carries out the reaction ATP + H2O = ADP + phosphate + H(+). The chain is DEAD-box ATP-dependent RNA helicase 49 (RH49) from Arabidopsis thaliana (Mouse-ear cress).